The sequence spans 130 residues: Secreted cysteine-rich effector 2 (130 aa).

A signal peptide spans 1–23; that stretch reads MLINAARLLLPAAALVHLSLAWA. A plant immunity suppression domain region spans residues 68 to 85; it reads LKNGEDWCKHCASPRVSV.

It is found in the secreted. The protein resides in the host cell. Its subcellular location is the host periplasm. Its function is as follows. Secreted effector required for full virulence of U.virens. Inhibits host pathogen-associated molecular pattern-triggered immunity including flg22- and chitin-induced defense gene expression and oxidative burst. The chain is Secreted cysteine-rich effector 2 from Ustilaginoidea virens (Rice false smut fungus).